We begin with the raw amino-acid sequence, 190 residues long: 6,7-dimethyl-8-ribityllumazine synthase (190 aa).

5-amino-6-(D-ribitylamino)uracil-binding positions include F23, 61 to 63, and 85 to 87; these read SFE and AVI. Position 90–91 (90–91) interacts with (2S)-2-hydroxy-3-oxobutyl phosphate; sequence QT. H93 acts as the Proton donor in catalysis. Residue F118 participates in 5-amino-6-(D-ribitylamino)uracil binding. R132 lines the (2S)-2-hydroxy-3-oxobutyl phosphate pocket.

This sequence belongs to the DMRL synthase family.

It catalyses the reaction (2S)-2-hydroxy-3-oxobutyl phosphate + 5-amino-6-(D-ribitylamino)uracil = 6,7-dimethyl-8-(1-D-ribityl)lumazine + phosphate + 2 H2O + H(+). Its pathway is cofactor biosynthesis; riboflavin biosynthesis; riboflavin from 2-hydroxy-3-oxobutyl phosphate and 5-amino-6-(D-ribitylamino)uracil: step 1/2. In terms of biological role, catalyzes the formation of 6,7-dimethyl-8-ribityllumazine by condensation of 5-amino-6-(D-ribitylamino)uracil with 3,4-dihydroxy-2-butanone 4-phosphate. This is the penultimate step in the biosynthesis of riboflavin. This Nostoc sp. (strain PCC 7120 / SAG 25.82 / UTEX 2576) protein is 6,7-dimethyl-8-ribityllumazine synthase.